Consider the following 313-residue polypeptide: Solute carrier family 25 member 36 (313 aa).

3 Solcar repeats span residues 4–110 (RDTL…CKEK), 118–205 (DSTQ…IKRK), and 226–310 (SDFV…VVYL). Transmembrane regions (helical) follow at residues 7–27 (LVHL…TCPL), 41–57 (LYIS…ASVN), 113–133 (NIFN…AGFT), 182–202 (MSAS…YESI), 228–248 (FVGM…IAYP), and 293–313 (QIPN…LLDG).

It belongs to the mitochondrial carrier (TC 2.A.29) family.

It localises to the mitochondrion inner membrane. Its function is as follows. Mitochondrial transporter that imports/exports pyrimidine nucleotides into and from mitochondria. Transports preferentially cytosine and uracil (deoxy)nucleoside mono-, di-, and triphosphates by uniport and antiport mechanism. This Gallus gallus (Chicken) protein is Solute carrier family 25 member 36 (SLC25A36).